The chain runs to 397 residues: Cathepsin E (397 aa).

An N-terminal signal peptide occupies residues 1 to 20; it reads MKPLLVLLLLLLLDLAQAQG. Residues 21-59 constitute a propeptide, activation peptide; that stretch reads ALHRVPLRRHQSLRKKLRAQGQLSEFWRSHNLDMTRLSE. Positions 79-393 constitute a Peptidase A1 domain; sequence YFGTISIGTP…DRGNNQVGLA (315 aa). N-linked (GlcNAc...) asparagine glycosylation is present at asparagine 91. Aspartate 97 is an active-site residue. Cystine bridges form between cysteine 110–cysteine 115 and cysteine 273–cysteine 277. Residue aspartate 282 is part of the active site. Residue asparagine 323 is glycosylated (N-linked (GlcNAc...) asparagine).

This sequence belongs to the peptidase A1 family. As to quaternary structure, homodimer; disulfide-linked. Post-translationally, glycosylated. The nature of the carbohydrate chain varies between cell types. In fibroblasts, the proenzyme contains a high mannose-type oligosaccharide, while the mature enzyme contains a complex-type oligosaccharide. In terms of tissue distribution, expressed abundantly in the stomach, club cells and alveolar macrophages of the lung, brain microglia, spleen and activated B-lymphocytes. Not expressed in resting B-lymphocytes.

The protein localises to the endosome. It carries out the reaction Similar to cathepsin D, but slightly broader specificity.. Functionally, may have a role in immune function. Probably involved in the processing of antigenic peptides during MHC class II-mediated antigen presentation. May play a role in activation-induced lymphocyte depletion in the thymus, and in neuronal degeneration and glial cell activation in the brain. This Mus musculus (Mouse) protein is Cathepsin E (Ctse).